A 380-amino-acid polypeptide reads, in one-letter code: 3-dehydroquinate synthase (380 aa).

This sequence belongs to the archaeal-type DHQ synthase family.

The enzyme catalyses 2-amino-2,3,7-trideoxy-D-lyxo-hept-6-ulosonate + NAD(+) + H2O = 3-dehydroquinate + NH4(+) + NADH + H(+). In terms of biological role, catalyzes the oxidative deamination and cyclization of 2-amino-3,7-dideoxy-D-threo-hept-6-ulosonic acid (ADH) to yield 3-dehydroquinate (DHQ), which is fed into the canonical shikimic pathway of aromatic amino acid biosynthesis. In Methanosarcina acetivorans (strain ATCC 35395 / DSM 2834 / JCM 12185 / C2A), this protein is 3-dehydroquinate synthase.